A 169-amino-acid polypeptide reads, in one-letter code: Phosphopantetheine adenylyltransferase (169 aa).

Serine 8 lines the substrate pocket. ATP is bound by residues 8-9 and histidine 16; that span reads SF. The substrate site is built by lysine 40, threonine 72, and arginine 86. ATP contacts are provided by residues 87–89, glutamate 97, and 122–128; these read GLR and YSFLSSS.

Belongs to the bacterial CoaD family. As to quaternary structure, homohexamer. Mg(2+) is required as a cofactor.

It localises to the cytoplasm. The catalysed reaction is (R)-4'-phosphopantetheine + ATP + H(+) = 3'-dephospho-CoA + diphosphate. The protein operates within cofactor biosynthesis; coenzyme A biosynthesis; CoA from (R)-pantothenate: step 4/5. Functionally, reversibly transfers an adenylyl group from ATP to 4'-phosphopantetheine, yielding dephospho-CoA (dPCoA) and pyrophosphate. This is Phosphopantetheine adenylyltransferase from Cyanothece sp. (strain PCC 7425 / ATCC 29141).